The chain runs to 305 residues: GTPase Era (305 aa).

One can recognise an Era-type G domain in the interval 11-181; the sequence is RSGFISFVGR…LDVITRLLPE (171 aa). The G1 stretch occupies residues 19–26; the sequence is GRPNTGKS. Residue 19 to 26 coordinates GTP; it reads GRPNTGKS. The tract at residues 45 to 49 is G2; the sequence is ETTRH. The G3 stretch occupies residues 66–69; sequence DTPG. Residues 66-70 and 130-133 contribute to the GTP site; these read DTPGL and TKVD. The interval 130–133 is G4; the sequence is TKVD. The tract at residues 160 to 162 is G5; it reads VSA. The 80-residue stretch at 212–291 folds into the KH type-2 domain; sequence LKDELPHSVA…YLDLRIKVLK (80 aa).

The protein belongs to the TRAFAC class TrmE-Era-EngA-EngB-Septin-like GTPase superfamily. Era GTPase family. Monomer.

It is found in the cytoplasm. The protein resides in the cell membrane. An essential GTPase that binds both GDP and GTP, with rapid nucleotide exchange. Plays a role in 16S rRNA processing and 30S ribosomal subunit biogenesis and possibly also in cell cycle regulation and energy metabolism. The chain is GTPase Era from Corynebacterium diphtheriae (strain ATCC 700971 / NCTC 13129 / Biotype gravis).